Consider the following 354-residue polypeptide: Uroporphyrinogen decarboxylase (354 aa).

Residues 27-31, Asp-77, Tyr-154, Ser-209, and His-327 each bind substrate; that span reads RQAGR.

This sequence belongs to the uroporphyrinogen decarboxylase family. As to quaternary structure, homodimer.

It is found in the cytoplasm. The catalysed reaction is uroporphyrinogen III + 4 H(+) = coproporphyrinogen III + 4 CO2. It functions in the pathway porphyrin-containing compound metabolism; protoporphyrin-IX biosynthesis; coproporphyrinogen-III from 5-aminolevulinate: step 4/4. Catalyzes the decarboxylation of four acetate groups of uroporphyrinogen-III to yield coproporphyrinogen-III. This is Uroporphyrinogen decarboxylase from Shewanella putrefaciens (strain CN-32 / ATCC BAA-453).